Here is an 89-residue protein sequence, read N- to C-terminus: Defensin-like protein 78 (89 aa).

The signal sequence occupies residues 1–30 (MANNMVASPYKNTFMMIALVLILLISGSEA). Cystine bridges form between Cys40–Cys75, Cys44–Cys67, Cys52–Cys73, and Cys56–Cys74.

This sequence belongs to the DEFL family.

It is found in the secreted. The protein is Defensin-like protein 78 of Arabidopsis thaliana (Mouse-ear cress).